Reading from the N-terminus, the 335-residue chain is Calcium-binding protein TgpCaBP (335 aa).

Residues 30 to 50 (LPLCVFSLFLFSFAFSALSGA) traverse the membrane as a helical segment. EF-hand domains lie at 113–148 (MHQHQVRMEFQAIDKDNDGKVSLSELEATYVDSLDQ), 153–188 (QHKKEVEQRFKTVDKDNDGLLDLSEIRILMDPGKDE), 190–225 (LMKIEIEEILNAQDKNGDRKITVTEFIETEGTGSLN), and 227–262 (VEKTELEKEFKSYDLNADGAIDVEELQQIIKDPHSH). Asp-126, Asp-128, Asp-130, Lys-132, Glu-137, Asp-166, Asp-168, Asp-170, Glu-177, Asp-203, Asn-205, Asp-207, Lys-209, Glu-214, Asp-240, Asn-242, Asp-244, and Glu-251 together coordinate Ca(2+). The short motif at 332–335 (HDEL) is the Prevents secretion from ER element.

Its subcellular location is the endoplasmic reticulum membrane. The protein localises to the cytoplasm. It localises to the cytosol. Its function is as follows. Calcium-binding protein. Participates in the efflux of intracellular Ca(2+) and storage of Ca(2+) in the endoplasmic reticulum. Required for gliding, host cell invasion and egress. Required for microneme secretion. This chain is Calcium-binding protein TgpCaBP, found in Toxoplasma gondii.